The chain runs to 448 residues: High mobility group B protein 15 (448 aa).

The ARID domain occupies 29-120; sequence VADPRLFMTS…LLNNYEQIYF (92 aa). The segment covering 219–236 has biased composition (polar residues); that stretch reads PQQSHGVLPNTLNISANP. 3 disordered regions span residues 219–270, 333–352, and 366–448; these read PQQS…RSGY, KKNGQLISNAVPLQQRLPEQ, and VEED…AEQN. Residues 244–255 are compositionally biased toward basic residues; sequence TKRRRRRKKSEI. A DNA-binding region (HMG box) is located at residues 263–330; it reads PKPNRSGYNF…RYRTEMEDYR (68 aa). A compositionally biased stretch (acidic residues) spans 389–398; the sequence is SIETDPELEE. Positions 399–412 are enriched in low complexity; sequence PSLNPSGPNLNPNP.

This sequence belongs to the HMGB family.

The protein localises to the nucleus. Functionally, binds preferentially DNA with A/T-rich content. In Arabidopsis thaliana (Mouse-ear cress), this protein is High mobility group B protein 15 (HMGB15).